The sequence spans 565 residues: Deoxyribodipyrimidine photo-lyase, mitochondrial (565 aa).

Positions 75 to 226 constitute a Photolyase/cryptochrome alpha/beta domain; that stretch reads STVMHWFRND…QLKYYHDSCI (152 aa). FAD contacts are provided by residues Tyr326 and 338–342; that span reads TSGLS. Interaction with DNA regions lie at residues 384-391 and 451-452; these read EVAWRDFY and NR. 482–484 is a binding site for FAD; it reads DGD. DNA is bound at residue Gln514.

Belongs to the DNA photolyase class-1 family. Monomer. The cofactor is FAD. (6R)-5,10-methylene-5,6,7,8-tetrahydrofolate serves as cofactor.

Its subcellular location is the nucleus. It localises to the mitochondrion. The enzyme catalyses cyclobutadipyrimidine (in DNA) = 2 pyrimidine residues (in DNA).. In terms of biological role, involved in repair of UV radiation-induced DNA damage. Catalyzes the light-dependent monomerization (300-600 nm) of cyclobutyl pyrimidine dimers (in cis-syn configuration), which are formed between adjacent bases on the same DNA strand upon exposure to ultraviolet radiation. The polypeptide is Deoxyribodipyrimidine photo-lyase, mitochondrial (PHR1) (Saccharomyces cerevisiae (strain ATCC 204508 / S288c) (Baker's yeast)).